Consider the following 233-residue polypeptide: Leucyl/phenylalanyl-tRNA--protein transferase (233 aa).

Belongs to the L/F-transferase family.

Its subcellular location is the cytoplasm. It carries out the reaction N-terminal L-lysyl-[protein] + L-leucyl-tRNA(Leu) = N-terminal L-leucyl-L-lysyl-[protein] + tRNA(Leu) + H(+). It catalyses the reaction N-terminal L-arginyl-[protein] + L-leucyl-tRNA(Leu) = N-terminal L-leucyl-L-arginyl-[protein] + tRNA(Leu) + H(+). The catalysed reaction is L-phenylalanyl-tRNA(Phe) + an N-terminal L-alpha-aminoacyl-[protein] = an N-terminal L-phenylalanyl-L-alpha-aminoacyl-[protein] + tRNA(Phe). In terms of biological role, functions in the N-end rule pathway of protein degradation where it conjugates Leu, Phe and, less efficiently, Met from aminoacyl-tRNAs to the N-termini of proteins containing an N-terminal arginine or lysine. This Desulfatibacillum aliphaticivorans protein is Leucyl/phenylalanyl-tRNA--protein transferase.